Here is a 35-residue protein sequence, read N- to C-terminus: Photosystem II reaction center protein Psb30 (35 aa).

The chain crosses the membrane as a helical span at residues 7–27 (LIANFAALALITLAGPAVIFI).

It belongs to the Psb30/Ycf12 family. In terms of assembly, PSII is composed of 1 copy each of membrane proteins PsbA, PsbB, PsbC, PsbD, PsbE, PsbF, PsbH, PsbI, PsbJ, PsbK, PsbL, PsbM, PsbT, PsbX, PsbY, PsbZ, Psb30/Ycf12, peripheral proteins of the oxygen-evolving complex and a large number of cofactors. It forms dimeric complexes.

The protein localises to the plastid. It localises to the organellar chromatophore thylakoid membrane. A core subunit of photosystem II (PSII), probably helps stabilize the reaction center. This chain is Photosystem II reaction center protein Psb30, found in Paulinella chromatophora.